The primary structure comprises 205 residues: MFLRHCITFTLIALLAGCAGFGSREALQGHGDPQQWRAHKEQLSSLDGWQINGKVGIRAPRDSGSGTLFWLQRQDYYDIRLAGPLGRGAARLTGRPGGVVLEVANQGRYEAASPEALLEEQLGWQLPVSHLVWWVRGLPAPDSKSKLTLDGDSRLASLDQDGWQVQYLSYTEQNGYWLPERLKLHGKDLDVTLVVKDWQPRQLGH.

The first 17 residues, 1 to 17 (MFLRHCITFTLIALLAG), serve as a signal peptide directing secretion. Residue cysteine 18 is the site of N-palmitoyl cysteine attachment. Cysteine 18 carries S-diacylglycerol cysteine lipidation.

Belongs to the LolB family. In terms of assembly, monomer.

It localises to the cell outer membrane. Its function is as follows. Plays a critical role in the incorporation of lipoproteins in the outer membrane after they are released by the LolA protein. The polypeptide is Outer-membrane lipoprotein LolB (Pseudomonas putida (strain W619)).